A 389-amino-acid chain; its full sequence is 2-deoxystreptamine N-acetyl-D-glucosaminyltransferase (389 aa).

This sequence belongs to the glycosyltransferase group 1 family.

It carries out the reaction 2-deoxystreptamine + UDP-N-acetyl-alpha-D-glucosamine = 2'-N-acetylparomamine + UDP + H(+). It functions in the pathway antibiotic biosynthesis; butirosin biosynthesis. In terms of biological role, glycosyltransferase involved in the biosynthesis of butirosin by mediating conversion of 2-deoxystreptamine (2-DOS) to 2'-N-acetylparomamine using UDP-alpha-D-glucosamine as sugar donor. The sequence is that of 2-deoxystreptamine N-acetyl-D-glucosaminyltransferase (btrM) from Niallia circulans (Bacillus circulans).